The primary structure comprises 644 residues: MFQDNPLLAQLKQQLHSQTPRAEGVVKATEKGFGFLEVDAQKSYFIPPPQMKKVMHGDRIVAVIHTEKERESAEPEELIEPFLTRFVGKVQGKNDRLSIVPDHPLLKDAIPCRAARGVQHEFKEGDWAVAEMRRHPLKGDRSFYADLTQYITFADDHFVPWWVTLARHNLEKEAPNGVATEMLDEGLERQDLTALNFVTIDSASTEDMDDALYAEELADGRLQLTVAIADPTAWIAEGSKLDNAAKIRAFTNYLPGFNIPMLPRELSDDLCSLRANEVRPALACRMIISADGTIDDDIAFFAATIESKAKLAYDNVSDWLENNGTWQPDNEGIAHQIRLLHRICLSRSEWRHHHALVFKDRPDYRFVLGEKGEVLDIVAEPRRIANRIVEESMIAANLCAARVLRDKLGFGIYNVHTGFDPANADALAALLKTHGLHVDAEEVLTLEGFCKLRRELDAQPSGFLDSRIRRFQSFAEISTEPGPHFGLGLEAYATWTSPIRKYGDMINHRLLKAVIKGEAIARPQEDITQQMAERRRLNRMAERDVGDWLYARFLNDKAGTNTRFAAEIIDVSRGGMRVRLVDNGAIAFIPAPFLHAVRDELVCSQENGTVQIKGETVYKVTDVIDVTIAEVRMETRSIIARPAA.

The RNB domain occupies arginine 189–lysine 516. Residues asparagine 561–alanine 643 form the S1 motif domain.

Belongs to the RNR ribonuclease family. RNase II subfamily.

The protein resides in the cytoplasm. The catalysed reaction is Exonucleolytic cleavage in the 3'- to 5'-direction to yield nucleoside 5'-phosphates.. Functionally, involved in mRNA degradation. Hydrolyzes single-stranded polyribonucleotides processively in the 3' to 5' direction. This chain is Exoribonuclease 2, found in Salmonella enteritidis PT4 (strain P125109).